A 219-amino-acid polypeptide reads, in one-letter code: Carbonic anhydrase 1 (219 aa).

Zn(2+) is bound by residues cysteine 39, aspartate 41, histidine 98, and cysteine 101.

This sequence belongs to the beta-class carbonic anhydrase family. As to quaternary structure, oligomer. It depends on Zn(2+) as a cofactor.

It catalyses the reaction hydrogencarbonate + H(+) = CO2 + H2O. In terms of biological role, reversible hydration of carbon dioxide. Carbon dioxide formed in the bicarbonate-dependent decomposition of cyanate by cyanase (CynS) diffuses out of the cell faster than it would be hydrated to bicarbonate, so the apparent function of this enzyme is to catalyze the hydration of carbon dioxide and thus prevent depletion of cellular bicarbonate. The polypeptide is Carbonic anhydrase 1 (cynT) (Escherichia coli O157:H7).